The chain runs to 226 residues: ATP synthase F(0) complex subunit a (226 aa).

6 helical membrane passes run 9–29 (FITP…FPAM), 68–88 (WALM…LGLV), 97–117 (QLSM…ITGF), 138–158 (IPML…ALAI), 164–184 (ITAG…LTSI), and 201–223 (ILEF…LYLH).

It belongs to the ATPase A chain family. Component of the ATP synthase complex composed at least of ATP5F1A/subunit alpha, ATP5F1B/subunit beta, ATP5MC1/subunit c (homooctomer), MT-ATP6/subunit a, MT-ATP8/subunit 8, ATP5ME/subunit e, ATP5MF/subunit f, ATP5MG/subunit g, ATP5MK/subunit k, ATP5MJ/subunit j, ATP5F1C/subunit gamma, ATP5F1D/subunit delta, ATP5F1E/subunit epsilon, ATP5PF/subunit F6, ATP5PB/subunit b, ATP5PD/subunit d, ATP5PO/subunit OSCP. ATP synthase complex consists of a soluble F(1) head domain (subunits alpha(3) and beta(3)) - the catalytic core - and a membrane F(0) domain - the membrane proton channel (subunits c, a, 8, e, f, g, k and j). These two domains are linked by a central stalk (subunits gamma, delta, and epsilon) rotating inside the F1 region and a stationary peripheral stalk (subunits F6, b, d, and OSCP). Interacts with DNAJC30; interaction is direct.

Its subcellular location is the mitochondrion inner membrane. The catalysed reaction is H(+)(in) = H(+)(out). Its function is as follows. Subunit a, of the mitochondrial membrane ATP synthase complex (F(1)F(0) ATP synthase or Complex V) that produces ATP from ADP in the presence of a proton gradient across the membrane which is generated by electron transport complexes of the respiratory chain. ATP synthase complex consist of a soluble F(1) head domain - the catalytic core - and a membrane F(1) domain - the membrane proton channel. These two domains are linked by a central stalk rotating inside the F(1) region and a stationary peripheral stalk. During catalysis, ATP synthesis in the catalytic domain of F(1) is coupled via a rotary mechanism of the central stalk subunits to proton translocation. With the subunit c (ATP5MC1), forms the proton-conducting channel in the F(0) domain, that contains two crucial half-channels (inlet and outlet) that facilitate proton movement from the mitochondrial intermembrane space (IMS) into the matrix. Protons are taken up via the inlet half-channel and released through the outlet half-channel, following a Grotthuss mechanism. The protein is ATP synthase F(0) complex subunit a of Dugong dugon (Dugong).